Here is an 808-residue protein sequence, read N- to C-terminus: Bifunctional uridylyltransferase/uridylyl-removing enzyme (808 aa).

The tract at residues 1-315 (MEAESPCAAS…ALVRRPKRRP (315 aa)) is uridylyltransferase. The tract at residues 316-609 (LDEGVVEYAG…EISPRDGERI (294 aa)) is uridylyl-removing. An HD domain is found at 430 to 544 (VDRHVVETAV…LEVLHALSEA (115 aa)). 2 ACT domains span residues 610–686 (DAVI…GMLQ) and 730–805 (ILEV…VDEP).

It belongs to the GlnD family. Requires Mg(2+) as cofactor.

It catalyses the reaction [protein-PII]-L-tyrosine + UTP = [protein-PII]-uridylyl-L-tyrosine + diphosphate. The catalysed reaction is [protein-PII]-uridylyl-L-tyrosine + H2O = [protein-PII]-L-tyrosine + UMP + H(+). Its function is as follows. Modifies, by uridylylation and deuridylylation, the PII regulatory protein (GlnB), in response to the nitrogen status of the cell that GlnD senses through the glutamine level. Under low glutamine levels, catalyzes the conversion of the PII protein and UTP to PII-UMP and PPi, while under higher glutamine levels, GlnD hydrolyzes PII-UMP to PII and UMP (deuridylylation). Thus, controls uridylylation state and activity of the PII protein, and plays an important role in the regulation of nitrogen assimilation and metabolism. The chain is Bifunctional uridylyltransferase/uridylyl-removing enzyme from Mycobacterium tuberculosis (strain CDC 1551 / Oshkosh).